Consider the following 345-residue polypeptide: MTRRINDTFLRACRGEKTAYVPVWYMRQAGRSQPEYRALKEKYSLFEITHQPELCAYVTRLPVEQYGVDAAILYKDIMTPLPAIGVDVEIRGGVGPVIANPIRSLHDVERLGEIDPEHDVPYVLETIRLLVNEQLDVPLIGFAGAPFTLASYMIEGGPSKNYHKTKAFMYAEPKAWFALMDKLAEMTIRYVKAQIQAGASAVQIFDSWVGAVNADDYRTFIKPAMARIFAALREEGAPLIMFGVGASHLAHEWNDLPLDVIGLDWRLSIREARRRGITKAIQGNLDPAVLLAPWDVIEERVKRILDEGMEQPGYIFNLGHGIFPDVQPATLKRLTAFIHDYTSTK.

Substrate is bound by residues 27 to 31 (RQAGR), Phe46, Asp76, Tyr152, Ser207, and His320.

Belongs to the uroporphyrinogen decarboxylase family. Homodimer.

Its subcellular location is the cytoplasm. The catalysed reaction is uroporphyrinogen III + 4 H(+) = coproporphyrinogen III + 4 CO2. Its pathway is porphyrin-containing compound metabolism; protoporphyrin-IX biosynthesis; coproporphyrinogen-III from 5-aminolevulinate: step 4/4. Functionally, catalyzes the decarboxylation of four acetate groups of uroporphyrinogen-III to yield coproporphyrinogen-III. This chain is Uroporphyrinogen decarboxylase, found in Geobacillus thermodenitrificans (strain NG80-2).